Reading from the N-terminus, the 396-residue chain is Stearoyl-[acyl-carrier-protein] 9-desaturase, chloroplastic (396 aa).

A chloroplast-targeting transit peptide spans 1-33 (MAIRINTATFQSDLYRSFAFPQPKPLRSPKFAM). 6 residues coordinate Fe cation: glutamate 138, glutamate 176, histidine 179, glutamate 229, glutamate 262, and histidine 265.

Belongs to the fatty acid desaturase type 2 family. In terms of assembly, homodimer. The cofactor is Fe(2+).

The protein resides in the plastid. It is found in the chloroplast. The catalysed reaction is octadecanoyl-[ACP] + 2 reduced [2Fe-2S]-[ferredoxin] + O2 + 2 H(+) = (9Z)-octadecenoyl-[ACP] + 2 oxidized [2Fe-2S]-[ferredoxin] + 2 H2O. It functions in the pathway lipid metabolism; fatty acid metabolism. Converts stearoyl-ACP to oleoyl-ACP by introduction of a cis double bond between carbons 9 and 10 of the acyl chain. This chain is Stearoyl-[acyl-carrier-protein] 9-desaturase, chloroplastic, found in Helianthus annuus (Common sunflower).